The sequence spans 239 residues: Secreted effector CFEM9 (239 aa).

An N-terminal signal peptide occupies residues 1-18; it reads MRVLKFLSLMAMLGCTIG. Residues 19–125 enclose the CFEM domain; it reads QSGSATPGSL…DALRRREDEY (107 aa). 4 disulfides stabilise this stretch: Cys-43–Cys-82, Cys-47–Cys-77, Cys-57–Cys-63, and Cys-65–Cys-98. Asp-60 contributes to the heme binding site. A compositionally biased stretch (polar residues) spans 187–199; sequence KSATTTEATRNTV. The tract at residues 187 to 216 is disordered; sequence KSATTTEATRNTVPASTTAPSPSPQLYTGN. The GPI-anchor amidated glycine moiety is linked to residue Gly-215. A glycan (N-linked (GlcNAc...) asparagine) is linked at Asn-216. Residues 216-239 constitute a propeptide, removed in mature form; sequence NASTSRATVSLTVVLTVAAVYLVL.

It belongs to the RBT5 family.

The protein localises to the cell membrane. The protein resides in the secreted. It localises to the host nucleus. It is found in the host cell membrane. Its function is as follows. Appears to function during host infection, and may play a role in suppressing the host immune response. The chain is Secreted effector CFEM9 from Marssonina brunnea f. sp. multigermtubi (strain MB_m1) (Marssonina leaf spot fungus).